Here is a 390-residue protein sequence, read N- to C-terminus: S-adenosylmethionine synthase 4 (390 aa).

Residue E9 participates in Mg(2+) binding. H15 contributes to the ATP binding site. Residue E43 coordinates K(+). Positions 56 and 99 each coordinate L-methionine. ATP-binding positions include 167 to 169 (DGK), 235 to 238 (SGRF), D246, 252 to 253 (RK), A269, K273, and K277. D246 serves as a coordination point for L-methionine. Residue K277 coordinates L-methionine.

Belongs to the AdoMet synthase family. As to quaternary structure, homotetramer. The cofactor is Mn(2+). Requires Mg(2+) as cofactor. Co(2+) is required as a cofactor. It depends on K(+) as a cofactor. In terms of tissue distribution, mostly expressed in flowers, seedpods and roots, and, to a lower extent, in stems and leaves.

It is found in the cytoplasm. It catalyses the reaction L-methionine + ATP + H2O = S-adenosyl-L-methionine + phosphate + diphosphate. It participates in amino-acid biosynthesis; S-adenosyl-L-methionine biosynthesis; S-adenosyl-L-methionine from L-methionine: step 1/1. Functionally, catalyzes the formation of S-adenosylmethionine from methionine and ATP. The reaction comprises two steps that are both catalyzed by the same enzyme: formation of S-adenosylmethionine (AdoMet) and triphosphate, and subsequent hydrolysis of the triphosphate. This chain is S-adenosylmethionine synthase 4 (MSAMS4), found in Brassica juncea (Indian mustard).